The sequence spans 267 residues: Tryptophan 2,3-dioxygenase (267 aa).

Residues 44–48 (FITIH) and Arg-114 each bind substrate. His-225 lines the heme pocket. Thr-239 is a substrate binding site.

Belongs to the tryptophan 2,3-dioxygenase family. In terms of assembly, homotetramer. It depends on heme as a cofactor.

It carries out the reaction L-tryptophan + O2 = N-formyl-L-kynurenine. It functions in the pathway amino-acid degradation; L-tryptophan degradation via kynurenine pathway; L-kynurenine from L-tryptophan: step 1/2. In terms of biological role, heme-dependent dioxygenase that catalyzes the oxidative cleavage of the L-tryptophan (L-Trp) pyrrole ring and converts L-tryptophan to N-formyl-L-kynurenine. Catalyzes the oxidative cleavage of the indole moiety. The polypeptide is Tryptophan 2,3-dioxygenase (Nocardioides sp. (strain ATCC BAA-499 / JS614)).